We begin with the raw amino-acid sequence, 239 residues long: 7-cyano-7-deazaguanine synthase (239 aa).

An ATP-binding site is contributed by 13–23 (FSGGQDSTTCL). Positions 192, 201, 204, and 207 each coordinate Zn(2+).

It belongs to the QueC family. Requires Zn(2+) as cofactor.

The enzyme catalyses 7-carboxy-7-deazaguanine + NH4(+) + ATP = 7-cyano-7-deazaguanine + ADP + phosphate + H2O + H(+). Its pathway is purine metabolism; 7-cyano-7-deazaguanine biosynthesis. Its function is as follows. Catalyzes the ATP-dependent conversion of 7-carboxy-7-deazaguanine (CDG) to 7-cyano-7-deazaguanine (preQ(0)). The polypeptide is 7-cyano-7-deazaguanine synthase (Shewanella sp. (strain MR-7)).